A 997-amino-acid chain; its full sequence is Sarcoplasmic/endoplasmic reticulum calcium ATPase 2 (997 aa).

The Cytoplasmic segment spans residues M1 to T48. S38 is subject to Phosphoserine. Residues L49–A69 traverse the membrane as a helical segment. Residues C70–V89 are Lumenal-facing. Residues E90–R110 traverse the membrane as a helical segment. The Cytoplasmic portion of the chain corresponds to N111–L253. Residues D254–I273 traverse the membrane as a helical segment. The Lumenal portion of the chain corresponds to I274–Y295. A 3'-nitrotyrosine mark is found at Y294 and Y295. A helical membrane pass occupies residues F296–A313. 4 residues coordinate Ca(2+): V304, A305, I307, and E309. The Cytoplasmic segment spans residues V314–M756. D351 serves as the catalytic 4-aspartylphosphate intermediate. The Mg(2+) site is built by D351 and T353. T353 is a binding site for ATP. T441 is modified (phosphothreonine). Residues E442, R489, and K514 each coordinate ATP. S531 is subject to Phosphoserine. Position 559 (R559) interacts with ATP. Positions M575–G594 are interaction with HAX1. S580 is modified (phosphoserine). Residues T624, G625, and D626 each contribute to the ATP site. S661 and S663 each carry phosphoserine. Positions 677 and 683 each coordinate ATP. Position 702 (D702) interacts with Mg(2+). Residue N705 participates in ATP binding. Residues K757–L776 traverse the membrane as a helical segment. Ca(2+)-binding residues include N767 and E770. Residues T777 to L786 lie on the Lumenal side of the membrane. A helical transmembrane segment spans residues I787–G807. Residues I787 to G807 form an interaction with PLN region. The interaction with TMEM64 and PDIA3 stretch occupies residues P788 to E997. Residues N795, T798, and D799 each coordinate Ca(2+). The Cytoplasmic portion of the chain corresponds to F808–L827. A helical membrane pass occupies residues I828–A850. Residues A851 to M896 are Lumenal-facing. Residues C875 and C887 are joined by a disulfide bond. A helical membrane pass occupies residues T897–S916. E907 contacts Ca(2+). Topologically, residues E917–N929 are cytoplasmic. Residues I930 to Y948 traverse the membrane as a helical segment. An interaction with PLN region spans residues W931–L942. At V949 to L963 the chain is on the lumenal side. The chain crosses the membrane as a helical span at residues T964–K984. Topologically, residues F985–E997 are cytoplasmic.

It belongs to the cation transport ATPase (P-type) (TC 3.A.3) family. Type IIA subfamily. In terms of assembly, interacts with sarcolipin (SLN); the interaction inhibits ATP2A2 Ca(2+) affinity. Interacts with phospholamban (PLN); the interaction inhibits ATP2A2 Ca(2+) affinity. Interacts with myoregulin (MRLN). Interacts with ARLN and ERLN; the interactions inhibit ATP2A2 Ca(2+) affinity. Interacts with STRIT1/DWORF; the interaction results in activation of ATP2A2. Interacts with the monomeric forms of SLN, PLN, ARLN, ERLN and STRI1/DWORF. Interacts with HAX1. Interacts with S100A8 and S100A9. Interacts with SLC35G1 and STIM1. Interacts with TMEM203. Interacts with TMEM64 and PDIA3. Interacts with TMX1. Interacts with TMX2. Interacts with VMP1; VMP1 competes with PLN and SLN to prevent them from forming an inhibitory complex with ATP2A2. Interacts with ULK1. Interacts with S100A1 in a Ca(2+)-dependent manner. Interacts with TUNAR. Interacts with FLVCR2; this interaction occurs in the absence of heme and promotes ATP2A2 proteasomal degradation; this complex is dissociated upon heme binding. Interacts with FNIP1. As to quaternary structure, interacts with TRAM2 (via C-terminus). The cofactor is Mg(2+). Post-translationally, nitrated under oxidative stress. Nitration on the two tyrosine residues inhibits catalytic activity. In terms of processing, serotonylated on Gln residues by TGM2 in response to hypoxia, leading to its inactivation. As to expression, isoform 1 is expressed in the heart.

It localises to the endoplasmic reticulum membrane. The protein localises to the sarcoplasmic reticulum membrane. The catalysed reaction is Ca(2+)(in) + ATP + H2O = Ca(2+)(out) + ADP + phosphate + H(+). Its activity is regulated as follows. Has different conformational states with differential Ca2+ affinity. The E1 conformational state (active form) shows high Ca(2+) affinity, while the E2 state exhibits low Ca(2+) affinity. Binding of ATP allosterically increases its affinity for subsequent binding of Ca2+. Reversibly inhibited by phospholamban (PLN) at low calcium concentrations. PLN inhibits ATP2A2 Ca(2+) affinity by disrupting its allosteric activation by ATP. Inhibited by sarcolipin (SLN) and myoregulin (MRLN). The inhibition is blocked by VMP1. Enhanced by STRIT1/DWORF; STRIT1 increases activity by displacing sarcolipin (SLN), phospholamban (PLN) and myoregulin (MRLN). Stabilizes SERCA2 in its E2 state. Its function is as follows. This magnesium-dependent enzyme catalyzes the hydrolysis of ATP coupled with the translocation of calcium from the cytosol to the sarcoplasmic reticulum lumen. Involved in autophagy in response to starvation. Upon interaction with VMP1 and activation, controls ER-isolation membrane contacts for autophagosome formation. Also modulates ER contacts with lipid droplets, mitochondria and endosomes. In coordination with FLVCR2 mediates heme-stimulated switching from mitochondrial ATP synthesis to thermogenesis. Functionally, involved in the regulation of the contraction/relaxation cycle. Acts as a regulator of TNFSF11-mediated Ca(2+) signaling pathways via its interaction with TMEM64 which is critical for the TNFSF11-induced CREB1 activation and mitochondrial ROS generation necessary for proper osteoclast generation. Association between TMEM64 and SERCA2 in the ER leads to cytosolic Ca(2+) spiking for activation of NFATC1 and production of mitochondrial ROS, thereby triggering Ca(2+) signaling cascades that promote osteoclast differentiation and activation. This is Sarcoplasmic/endoplasmic reticulum calcium ATPase 2 (ATP2A2) from Felis catus (Cat).